The primary structure comprises 429 residues: Adenosylhomocysteinase (429 aa).

Positions 64, 136, and 161 each coordinate substrate. 162–164 (TTT) is a binding site for NAD(+). Substrate contacts are provided by lysine 191 and aspartate 195. Residues asparagine 196, 225–230 (GYGWCG), glutamate 248, asparagine 283, 304–306 (SGH), and asparagine 351 each bind NAD(+).

This sequence belongs to the adenosylhomocysteinase family. NAD(+) serves as cofactor.

The protein resides in the cytoplasm. It catalyses the reaction S-adenosyl-L-homocysteine + H2O = L-homocysteine + adenosine. It functions in the pathway amino-acid biosynthesis; L-homocysteine biosynthesis; L-homocysteine from S-adenosyl-L-homocysteine: step 1/1. Functionally, may play a key role in the regulation of the intracellular concentration of adenosylhomocysteine. This Gloeothece citriformis (strain PCC 7424) (Cyanothece sp. (strain PCC 7424)) protein is Adenosylhomocysteinase.